We begin with the raw amino-acid sequence, 147 residues long: UPF0179 protein MTH_609 (147 aa).

Belongs to the UPF0179 family.

The chain is UPF0179 protein MTH_609 from Methanothermobacter thermautotrophicus (strain ATCC 29096 / DSM 1053 / JCM 10044 / NBRC 100330 / Delta H) (Methanobacterium thermoautotrophicum).